Reading from the N-terminus, the 388-residue chain is Succinate--CoA ligase [ADP-forming] subunit beta (388 aa).

Positions 9–244 constitute an ATP-grasp domain; sequence KQLFAEFGLP…PSQEDKREAH (236 aa). Residues lysine 46, 53–55, glutamate 99, serine 102, and glutamate 107 contribute to the ATP site; that span reads GRG. 2 residues coordinate Mg(2+): asparagine 199 and aspartate 213. Substrate contacts are provided by residues asparagine 264 and 321–323; that span reads GIV.

The protein belongs to the succinate/malate CoA ligase beta subunit family. In terms of assembly, heterotetramer of two alpha and two beta subunits. Mg(2+) is required as a cofactor.

The catalysed reaction is succinate + ATP + CoA = succinyl-CoA + ADP + phosphate. The enzyme catalyses GTP + succinate + CoA = succinyl-CoA + GDP + phosphate. Its pathway is carbohydrate metabolism; tricarboxylic acid cycle; succinate from succinyl-CoA (ligase route): step 1/1. Succinyl-CoA synthetase functions in the citric acid cycle (TCA), coupling the hydrolysis of succinyl-CoA to the synthesis of either ATP or GTP and thus represents the only step of substrate-level phosphorylation in the TCA. The beta subunit provides nucleotide specificity of the enzyme and binds the substrate succinate, while the binding sites for coenzyme A and phosphate are found in the alpha subunit. This chain is Succinate--CoA ligase [ADP-forming] subunit beta, found in Vibrio vulnificus (strain YJ016).